The chain runs to 259 residues: MLKELRQKRPLVHNITNYVVAQFVANGLLALGASPLMSDAIAEMQDLAKISDALAINIGTLNERTILCAKEAIKHYKALNKPIVLDPVGCSASALRHGTSLELLESEGISVLRGNAAELGSLVGISCGSKGLDSHYATTPIEIVKLVAQKYSVIAVMTGKTDYVSDGKKVFSITGGSEYLALITGAGCLHAAACASFLSLRKDPLDSMAQLCALYKQAAFNAQKKVSENNGSNGSFLFYFLDALSLPIKLENSLIKEEL.

Met37 serves as a coordination point for substrate. ATP-binding residues include Arg113 and Thr158. Gly185 provides a ligand contact to substrate.

The protein belongs to the Thz kinase family. It depends on Mg(2+) as a cofactor.

The catalysed reaction is 5-(2-hydroxyethyl)-4-methylthiazole + ATP = 4-methyl-5-(2-phosphooxyethyl)-thiazole + ADP + H(+). It functions in the pathway cofactor biosynthesis; thiamine diphosphate biosynthesis; 4-methyl-5-(2-phosphoethyl)-thiazole from 5-(2-hydroxyethyl)-4-methylthiazole: step 1/1. Its function is as follows. Catalyzes the phosphorylation of the hydroxyl group of 4-methyl-5-beta-hydroxyethylthiazole (THZ). This Helicobacter pylori (strain Shi470) protein is Hydroxyethylthiazole kinase.